A 959-amino-acid polypeptide reads, in one-letter code: DNA polymerase 1 (959 aa).

Residues Met1–Glu110 form a disordered region. The segment covering Lys44–Ser60 has biased composition (basic and acidic residues).

It belongs to the DNA polymerase type-B family.

It catalyses the reaction DNA(n) + a 2'-deoxyribonucleoside 5'-triphosphate = DNA(n+1) + diphosphate. This chain is DNA polymerase 1 (polA), found in Aeropyrum pernix (strain ATCC 700893 / DSM 11879 / JCM 9820 / NBRC 100138 / K1).